We begin with the raw amino-acid sequence, 143 residues long: Large ribosomal subunit protein uL11 (143 aa).

The protein belongs to the universal ribosomal protein uL11 family. In terms of assembly, part of the ribosomal stalk of the 50S ribosomal subunit. Interacts with L10 and the large rRNA to form the base of the stalk. L10 forms an elongated spine to which L12 dimers bind in a sequential fashion forming a multimeric L10(L12)X complex. In terms of processing, one or more lysine residues are methylated.

Its function is as follows. Forms part of the ribosomal stalk which helps the ribosome interact with GTP-bound translation factors. This chain is Large ribosomal subunit protein uL11, found in Herminiimonas arsenicoxydans.